Here is a 71-residue protein sequence, read N- to C-terminus: MVPPVQVSPLIKLGRYSALFLGMAYGAKRYNYLKPRAEEERRLAAEEKKKRDEQKRIERELAEAQEDTILK.

Lysine 34 carries the post-translational modification N6-acetyllysine.

This sequence belongs to the ATPase e subunit family. Component of the ATP synthase complex composed at least of ATP5F1A/subunit alpha, ATP5F1B/subunit beta, ATP5MC1/subunit c (homooctomer), MT-ATP6/subunit a, MT-ATP8/subunit 8, ATP5ME/subunit e, ATP5MF/subunit f, ATP5MG/subunit g, ATP5MK/subunit k, ATP5MJ/subunit j, ATP5F1C/subunit gamma, ATP5F1D/subunit delta, ATP5F1E/subunit epsilon, ATP5PF/subunit F6, ATP5PB/subunit b, ATP5PD/subunit d, ATP5PO/subunit OSCP. ATP synthase complex consists of a soluble F(1) head domain (subunits alpha(3) and beta(3)) - the catalytic core - and a membrane F(0) domain - the membrane proton channel (subunits c, a, 8, e, f, g, k and j). These two domains are linked by a central stalk (subunits gamma, delta, and epsilon) rotating inside the F1 region and a stationary peripheral stalk (subunits F6, b, d, and OSCP).

It localises to the mitochondrion. Its subcellular location is the mitochondrion inner membrane. Its function is as follows. Subunit e, of the mitochondrial membrane ATP synthase complex (F(1)F(0) ATP synthase or Complex V) that produces ATP from ADP in the presence of a proton gradient across the membrane which is generated by electron transport complexes of the respiratory chain. ATP synthase complex consist of a soluble F(1) head domain - the catalytic core - and a membrane F(1) domain - the membrane proton channel. These two domains are linked by a central stalk rotating inside the F(1) region and a stationary peripheral stalk. During catalysis, ATP synthesis in the catalytic domain of F(1) is coupled via a rotary mechanism of the central stalk subunits to proton translocation. In vivo, can only synthesize ATP although its ATP hydrolase activity can be activated artificially in vitro. Part of the complex F(0) domain. The sequence is that of ATP synthase F(0) complex subunit e, mitochondrial from Bos taurus (Bovine).